A 171-amino-acid polypeptide reads, in one-letter code: 3-hydroxydecanoyl-[acyl-carrier-protein] dehydratase (171 aa).

Histidine 70 is a catalytic residue.

It belongs to the thioester dehydratase family. FabA subfamily. As to quaternary structure, homodimer.

The protein resides in the cytoplasm. The catalysed reaction is a (3R)-hydroxyacyl-[ACP] = a (2E)-enoyl-[ACP] + H2O. It carries out the reaction (3R)-hydroxydecanoyl-[ACP] = (2E)-decenoyl-[ACP] + H2O. The enzyme catalyses (2E)-decenoyl-[ACP] = (3Z)-decenoyl-[ACP]. The protein operates within lipid metabolism; fatty acid biosynthesis. Its function is as follows. Necessary for the introduction of cis unsaturation into fatty acids. Catalyzes the dehydration of (3R)-3-hydroxydecanoyl-ACP to E-(2)-decenoyl-ACP and then its isomerization to Z-(3)-decenoyl-ACP. Can catalyze the dehydratase reaction for beta-hydroxyacyl-ACPs with saturated chain lengths up to 16:0, being most active on intermediate chain length. This is 3-hydroxydecanoyl-[acyl-carrier-protein] dehydratase from Xanthomonas axonopodis pv. citri (strain 306).